Here is a 121-residue protein sequence, read N- to C-terminus: Small ribosomal subunit protein bS6 (121 aa).

The tract at residues 102-121 (MMRNVEREEARKAQQQEYAA) is disordered. Positions 105 to 115 (NVEREEARKAQ) are enriched in basic and acidic residues.

Belongs to the bacterial ribosomal protein bS6 family.

Its function is as follows. Binds together with bS18 to 16S ribosomal RNA. The chain is Small ribosomal subunit protein bS6 from Polaromonas sp. (strain JS666 / ATCC BAA-500).